The primary structure comprises 236 residues: Small ribosomal subunit protein uS2c (236 aa).

Belongs to the universal ribosomal protein uS2 family.

The protein resides in the plastid. It is found in the chloroplast. In Populus alba (White poplar), this protein is Small ribosomal subunit protein uS2c (rps2).